Reading from the N-terminus, the 310-residue chain is Formimidoylglutamase (310 aa).

Residues His-120, Asp-148, His-150, Asp-152, Asp-233, and Asp-235 each contribute to the Mn(2+) site.

It belongs to the arginase family. Mn(2+) is required as a cofactor.

It catalyses the reaction N-formimidoyl-L-glutamate + H2O = formamide + L-glutamate. It functions in the pathway amino-acid degradation; L-histidine degradation into L-glutamate; L-glutamate from N-formimidoyl-L-glutamate (hydrolase route): step 1/1. Functionally, catalyzes the conversion of N-formimidoyl-L-glutamate to L-glutamate and formamide. The sequence is that of Formimidoylglutamase from Nocardia farcinica (strain IFM 10152).